The following is a 141-amino-acid chain: Light-regulated protein 1, chloroplastic (141 aa).

The N-terminal 41 residues, 1 to 41 (MQGALFIKPTILLPLPSSVSSPKLTFLLPHATKASRLSSLR), are a transit peptide targeting the chloroplast. Residues 35–51 (SRLSSLRSNNSSSSSSL) are compositionally biased toward low complexity. A disordered region spans residues 35–58 (SRLSSLRSNNSSSSSSLTSDPNTV). The interval 58–132 (VDYNSSILSV…ACDDLGGEFC (75 aa)) is 2 X 15 AA approximate repeats. 2 consecutive repeat copies span residues 67-81 (VFPAEACEVISGYAC) and 118-132 (VFREEACDDLGGEFC).

In terms of assembly, component of high molecular weight thylakoid LFNRs-containing protein complexes containing LIR1, LFNR1, LFNR2, TIC62 and TROL proteins. Interacts directly with LFNR1 and LFNR2; LIR1 increases the affinity of LFNR1 and LFNR2 for TIC62 and subsequent thylakoid relocalization. May form interchain disulfide bonds with LFNR1 and LFNR2.

It localises to the plastid. It is found in the chloroplast thylakoid membrane. Its subcellular location is the chloroplast envelope. The protein resides in the chloroplast stroma. Thylakoid-determinant subunit of high molecular weight LFNRs-containing protein complexes. The chain is Light-regulated protein 1, chloroplastic from Arabidopsis thaliana (Mouse-ear cress).